A 599-amino-acid chain; its full sequence is Aspartate--tRNA(Asp/Asn) ligase (599 aa).

Glu180 lines the L-aspartate pocket. The interval 204-207 (QLLK) is aspartate. Arg226 lines the L-aspartate pocket. ATP contacts are provided by residues 226–228 (RDE) and Gln235. Residue His457 participates in L-aspartate binding. Glu491 contacts ATP. L-aspartate is bound at residue Arg498. 543–546 (GWDR) contacts ATP. A disordered region spans residues 565 to 599 (KAGGGRDPLTGAPAPISDEQRAETGVDYDPDADEN). Residues 590–599 (VDYDPDADEN) show a composition bias toward acidic residues.

This sequence belongs to the class-II aminoacyl-tRNA synthetase family. Type 1 subfamily. Homodimer.

Its subcellular location is the cytoplasm. It carries out the reaction tRNA(Asx) + L-aspartate + ATP = L-aspartyl-tRNA(Asx) + AMP + diphosphate. Its function is as follows. Aspartyl-tRNA synthetase with relaxed tRNA specificity since it is able to aspartylate not only its cognate tRNA(Asp) but also tRNA(Asn). Reaction proceeds in two steps: L-aspartate is first activated by ATP to form Asp-AMP and then transferred to the acceptor end of tRNA(Asp/Asn). The sequence is that of Aspartate--tRNA(Asp/Asn) ligase from Bifidobacterium longum (strain DJO10A).